We begin with the raw amino-acid sequence, 133 residues long: ISVHRCLGVLRPLHSLRWGRARYARRVAFAVWVLVLYCQAPVLYFVTTSTRSSRIICHDTSARELFSHFVAYSSVMLSLLFAAPFAVILVCYVLMARRLLKPAYGTSGGLPRAKRKSVRTIAIVLTVFVLCFL.

At 1-26 (ISVHRCLGVLRPLHSLRWGRARYARR) the chain is on the cytoplasmic side. A helical transmembrane segment spans residues 27–47 (VAFAVWVLVLYCQAPVLYFVT). Over 48-74 (TSTRSSRIICHDTSARELFSHFVAYSS) the chain is Extracellular. Residues 75–95 (VMLSLLFAAPFAVILVCYVLM) traverse the membrane as a helical segment. Residues 96–116 (ARRLLKPAYGTSGGLPRAKRK) lie on the Cytoplasmic side of the membrane. A helical transmembrane segment spans residues 117 to 133 (SVRTIAIVLTVFVLCFL).

The protein belongs to the G-protein coupled receptor 1 family.

It localises to the cell membrane. Functionally, receptor for ATP and UTP coupled to G-proteins that activate a phosphatidylinositol-calcium second messenger system. This Bos taurus (Bovine) protein is P2Y purinoceptor 2 (P2RY2).